A 359-amino-acid chain; its full sequence is Fructose-bisphosphate aldolase (359 aa).

Residue S62 participates in D-glyceraldehyde 3-phosphate binding. D110 serves as the catalytic Proton donor. The Zn(2+) site is built by H111, D145, E175, and H227. A dihydroxyacetone phosphate-binding site is contributed by G228. H265 provides a ligand contact to Zn(2+). Dihydroxyacetone phosphate is bound by residues 266-268 (GGS) and 287-290 (NIDT).

It belongs to the class II fructose-bisphosphate aldolase family. As to quaternary structure, homodimer. Zn(2+) serves as cofactor.

The enzyme catalyses beta-D-fructose 1,6-bisphosphate = D-glyceraldehyde 3-phosphate + dihydroxyacetone phosphate. It functions in the pathway carbohydrate degradation; glycolysis; D-glyceraldehyde 3-phosphate and glycerone phosphate from D-glucose: step 4/4. Functionally, catalyzes the aldol condensation of dihydroxyacetone phosphate (DHAP or glycerone-phosphate) with glyceraldehyde 3-phosphate (G3P) to form fructose 1,6-bisphosphate (FBP) in gluconeogenesis and the reverse reaction in glycolysis. The chain is Fructose-bisphosphate aldolase (fba) from Haemophilus influenzae (strain ATCC 51907 / DSM 11121 / KW20 / Rd).